The chain runs to 315 residues: 2-oxoglutarate and iron-dependent oxygenase domain-containing protein 3 (315 aa).

The disordered stretch occupies residues 1–32 (MAPQRRGPPRVPEGNSAAERRHANSTKKDRLP). The Cytoplasmic segment spans residues 1 to 41 (MAPQRRGPPRVPEGNSAAERRHANSTKKDRLPQEAQRTWLR). A compositionally biased stretch (basic and acidic residues) spans 18–32 (AERRHANSTKKDRLP). Residues 42–62 (IVALGVSLALVTFLLWSSAGI) traverse the membrane as a helical; Signal-anchor for type II membrane protein segment. The Lumenal segment spans residues 63-315 (DDDVAEVVAH…DHGIEDPVLT (253 aa)). Positions 203–305 (KPTFFSRINS…AITIAFTCNP (103 aa)) constitute a Fe2OG dioxygenase domain. A glycan (N-linked (GlcNAc...) asparagine) is linked at asparagine 211. Fe cation contacts are provided by histidine 226 and aspartate 228. Residue asparagine 263 is glycosylated (N-linked (GlcNAc...) asparagine). A Fe cation-binding site is contributed by histidine 284. Arginine 294 is an active-site residue. Arginine 294 serves as a coordination point for 2-oxoglutarate.

This sequence belongs to the OGFOD3 family. It depends on Fe(2+) as a cofactor. L-ascorbate serves as cofactor.

Its subcellular location is the membrane. This is 2-oxoglutarate and iron-dependent oxygenase domain-containing protein 3 (Ogfod3) from Rattus norvegicus (Rat).